Consider the following 608-residue polypeptide: Kelch-like protein 10 (608 aa).

One can recognise a BTB domain in the interval 39–106 (CDVVIKVNGF…AYTRTVPITP (68 aa)). Kelch repeat units lie at residues 292–339 (ILFA…YLKG), 340–386 (YVYI…VLGN), 388–433 (IYAM…TLYG), 434–480 (KVYI…AYGE), 481–527 (HVYA…VVDD), and 529–574 (LFVV…VVPG). At S501 the chain carries Phosphoserine.

In terms of assembly, self-associates. Interacts with CUL3; indicative for the participation in an E3 ubiquitin ligase complex.

It is found in the cytoplasm. It participates in protein modification; protein ubiquitination. Its function is as follows. May be a substrate-specific adapter of a CUL3-based E3 ubiquitin-protein ligase complex which mediates the ubiquitination and subsequent proteasomal degradation of target proteins during spermatogenesis. The sequence is that of Kelch-like protein 10 (KLHL10) from Homo sapiens (Human).